Consider the following 288-residue polypeptide: Mortality factor 4-like protein 2 (288 aa).

Over residues 1-15 the composition is skewed to polar residues; the sequence is MSSRKQASQTRGQQS. The disordered stretch occupies residues 1–115; sequence MSSRKQASQT…DPTVESEEAF (115 aa). The residue at position 71 (Ser71) is a Phosphoserine. The MRG domain occupies 117 to 288; it reads SRMEVKVKIP…ASADYHRKAL (172 aa).

In terms of assembly, component of the NuA4 histone acetyltransferase complex which contains the catalytic subunit KAT5/TIP60 and the subunits EP400, TRRAP/PAF400, BRD8/SMAP, EPC1, DMAP1/DNMAP1, RUVBL1/TIP49, RUVBL2, ING3, actin, ACTL6A/BAF53A, MORF4L1/MRG15, MORF4L2/MRGX, MRGBP, YEATS4/GAS41 and VPS72/YL1. The NuA4 complex interacts with MYC and the adenovirus E1A protein. MORF4L1 may also participate in the formation of NuA4 related complexes which lack the KAT5/TIP60 catalytic subunit, but which include the SWI/SNF related protein SRCAP. Component of the MSIN3A histone deacetylase complex, which includes SIN3A, HDAC2, ARID4B, MORF4L1, RBBP4/RbAp48, and RBBP7/RbAp46. Interacts with MRFAP1 and RB1. May also interact with one or more as yet undefined members of the TLE (transducin-like enhancer of split) family of transcriptional repressors.

The protein resides in the nucleus. Functionally, component of the NuA4 histone acetyltransferase complex which is involved in transcriptional activation of select genes principally by acetylation of nucleosomal histone H4 and H2A. This modification may both alter nucleosome - DNA interactions and promote interaction of the modified histones with other proteins which positively regulate transcription. This complex may be required for the activation of transcriptional programs associated with oncogene and proto-oncogene mediated growth induction, tumor suppressor mediated growth arrest and replicative senescence, apoptosis, and DNA repair. The NuA4 complex ATPase and helicase activities seem to be, at least in part, contributed by the association of RUVBL1 and RUVBL2 with EP400. NuA4 may also play a direct role in DNA repair when directly recruited to sites of DNA damage. Also a component of the MSIN3A complex which acts to repress transcription by deacetylation of nucleosomal histones. The polypeptide is Mortality factor 4-like protein 2 (Morf4l2) (Mus musculus (Mouse)).